The primary structure comprises 705 residues: Ovotransferrin (705 aa).

The signal sequence occupies residues 1 to 19 (MKLILCTVLSLGIAAVCFA). 2 consecutive Transferrin-like domains span residues 26 to 352 (IRWC…SMRK) and 364 to 689 (IQWC…SLKT). 2 disulfide bridges follow: Cys-29-Cys-64 and Cys-39-Cys-55. 2 residues coordinate Fe(3+): Asp-79 and Tyr-111. Disulfide bonds link Cys-134–Cys-216, Cys-179–Cys-193, Cys-190–Cys-201, and Cys-247–Cys-261. 4 residues coordinate hydrogencarbonate: Thr-136, Arg-140, Ala-142, and Gly-143. Tyr-210 contacts Fe(3+). His-269 serves as a coordination point for Fe(3+). The interval 352–360 (KDQLTPSPR) is connecting region. 2 disulfide bridges follow: Cys-367–Cys-399 and Cys-377–Cys-390. Fe(3+) contacts are provided by Asp-414 and Tyr-450. 7 disulfide bridges follow: Cys-424-Cys-699, Cys-440-Cys-662, Cys-473-Cys-549, Cys-497-Cys-690, Cys-507-Cys-521, Cys-518-Cys-532, and Cys-589-Cys-603. 4 residues coordinate hydrogencarbonate: Thr-475, Arg-479, Ala-481, and Gly-482. The N-linked (GlcNAc...) asparagine glycan is linked to Asn-492. A Fe(3+)-binding site is contributed by Tyr-543. Position 611 (His-611) interacts with Fe(3+).

Belongs to the transferrin family. Monomer. In terms of processing, different forms of hen transferrin are distinguished by their carbohydrate composition. Ovotransferrin and embryo serum transferrin but not adult serum transferrin, have bisecting N-acetylglucosamine. Transferrin secreted by embryo hepatocytes in primary culture is marked by the presence of (alpha1-6) fucosylation of the core N-acetylglucosamine. Serum transferrins also differ in the number of attached neuraminic acid residues. In both embryo forms, sialylation occurs on the Man (alpha 1-3)-linked antennae. Expressed in the magnum of the oviduct (at protein level).

The protein localises to the secreted. Functionally, transferrins are iron binding transport proteins which can bind two Fe(3+) ions in association with the binding of an anion, usually bicarbonate. Responsible for the transport of iron from sites of absorption and heme degradation to those of storage and utilization. There are two forms of hen transferrin, ovotransferrin, found in the ovoducts and, serum transferrin, secreted by the liver. Serum transferrin may also have a role in stimulating cell proliferation and is regulated by iron levels. Ovotransferrin has a bacteriostatic function and, is not controlled by iron levels. The chain is Ovotransferrin from Gallus gallus (Chicken).